We begin with the raw amino-acid sequence, 254 residues long: MSDFVRADGRALDEMRPVRIVRGFTTNPAGSVLVEFGNTRVMCTASVEDRVPRFKKDSGEGWLTAEYSMLPSATAERMPRESMRGKVKGRTHEISRLVGRSLRAAIDLKALGENTIALDCDVLQADGGTRTASITGAYVALADALTYLEAEGLVSQNALLPPVAAVSVGLIDGHVCLDLPYEEDSRAEVDMNVVMTESGEFVEIQGTGEHSTFSREQLMQFMDAAEKGCSELIRAQKEALSKPYPKRLPNRKNA.

Phosphate contacts are provided by residues arginine 90 and 128-130 (GTR).

Belongs to the RNase PH family. Homohexameric ring arranged as a trimer of dimers.

The catalysed reaction is tRNA(n+1) + phosphate = tRNA(n) + a ribonucleoside 5'-diphosphate. Functionally, phosphorolytic 3'-5' exoribonuclease that plays an important role in tRNA 3'-end maturation. Removes nucleotide residues following the 3'-CCA terminus of tRNAs; can also add nucleotides to the ends of RNA molecules by using nucleoside diphosphates as substrates, but this may not be physiologically important. Probably plays a role in initiation of 16S rRNA degradation (leading to ribosome degradation) during starvation. The protein is Ribonuclease PH of Corynebacterium kroppenstedtii (strain DSM 44385 / JCM 11950 / CIP 105744 / CCUG 35717).